The sequence spans 1228 residues: ABC transporter B family member 16 (1228 aa).

The next 6 helical transmembrane spans lie at 22-42 (MGLGLIGAVGDGFITPILFFI), 69-89 (LAMLYVACASWVICFLEGYCW), 145-167 (LPNILMNASAFVGSYIVGFMLLW), 171-193 (IVGFPFIILLLIPGLMYGRALIG), 251-271 (GIAIGSNGIVYAIWGFLTWYG), and 283-303 (GTVSTVTVCVTFGGTALGQAL). Residues 22-311 (MGLGLIGAVG…ALSNLKYFSE (290 aa)) enclose the ABC transmembrane type-1 1 domain. The ABC transporter 1 domain maps to 346-582 (VEFNNVKCKY…DGKYTSLVRL (237 aa)). ATP is bound at residue 381-388 (GGSGSGKS). Residues Asn529, Asn593, and Asn628 are each glycosylated (N-linked (GlcNAc...) asparagine). The ABC transmembrane type-1 2 domain maps to 658–946 (ALCGCLSASL…AGTMTTDLAK (289 aa)). 2 helical membrane-spanning segments follow: residues 667–687 (LGGAVQPIYAYSSGLMISVFF) and 700–720 (IYVLLFFGLALFTFFTSISQQ). Asn755 is a glycosylation site (N-linked (GlcNAc...) asparagine). Transmembrane regions (helical) follow at residues 781–801 (LLVQTISTVMVACTIGLVIAW) and 805–825 (IVMISVQPVIIVCYYIQRVLL). N-linked (GlcNAc...) asparagine glycosylation is present at Asn827. The next 2 membrane-spanning stretches (helical) occupy residues 881 to 901 (SWLAGIMLGTTQSLITCTSAL) and 920 to 940 (FFELFLIFKTTGRAIAEAGTM). Positions 981 to 1219 (ITFLNVDFAY…GPTGSYFSLV (239 aa)) constitute an ABC transporter 2 domain. A glycan (N-linked (GlcNAc...) asparagine) is linked at Asn1001. Residue 1016-1023 (GPSRSGKS) participates in ATP binding.

The protein belongs to the ABC transporter superfamily. ABCB family. Multidrug resistance exporter (TC 3.A.1.201) subfamily.

The protein localises to the membrane. This Arabidopsis thaliana (Mouse-ear cress) protein is ABC transporter B family member 16 (ABCB16).